A 242-amino-acid polypeptide reads, in one-letter code: Ribonuclease PH (242 aa).

Residues arginine 89 and glycine 127–arginine 129 each bind phosphate.

The protein belongs to the RNase PH family. As to quaternary structure, homohexameric ring arranged as a trimer of dimers.

The enzyme catalyses tRNA(n+1) + phosphate = tRNA(n) + a ribonucleoside 5'-diphosphate. Phosphorolytic 3'-5' exoribonuclease that plays an important role in tRNA 3'-end maturation. Removes nucleotide residues following the 3'-CCA terminus of tRNAs; can also add nucleotides to the ends of RNA molecules by using nucleoside diphosphates as substrates, but this may not be physiologically important. Probably plays a role in initiation of 16S rRNA degradation (leading to ribosome degradation) during starvation. The protein is Ribonuclease PH of Neisseria meningitidis serogroup B (strain ATCC BAA-335 / MC58).